An 874-amino-acid polypeptide reads, in one-letter code: Probable inorganic carbon transporter subunit DabA (874 aa).

Residues C398, D400, H580, and C595 each contribute to the Zn(2+) site.

It belongs to the inorganic carbon transporter (TC 9.A.2) DabA family. Forms a complex with DabB. Requires Zn(2+) as cofactor.

The protein resides in the cell membrane. In terms of biological role, part of an energy-coupled inorganic carbon pump. The protein is Probable inorganic carbon transporter subunit DabA of Bacillus cytotoxicus (strain DSM 22905 / CIP 110041 / 391-98 / NVH 391-98).